The chain runs to 145 residues: Galectin-5 (145 aa).

An N-acetylserine modification is found at Ser-2. The Galectin domain maps to Phe-17–Thr-145. A beta-D-galactoside is bound at residue Trp-77–Ser-83.

Monomer. In terms of tissue distribution, erythrocytes.

May function in erythrocyte differentiation. The polypeptide is Galectin-5 (Lgals5) (Rattus norvegicus (Rat)).